A 377-amino-acid chain; its full sequence is Guanine nucleotide-binding protein subunit alpha-13 (377 aa).

Residues cysteine 14 and cysteine 18 are each lipidated (S-palmitoyl cysteine). In terms of domain architecture, G-alpha spans 47–377; it reads RLVKILLLGA…HDNLKQLMLQ (331 aa). Residues 50-63 are G1 motif; the sequence is KILLLGAGESGKST. Residues 58 to 63, serine 173, and 197 to 200 each bind GTP; these read ESGKST and LLAR. Serine 62 is a Mg(2+) binding site. The segment at 195–203 is G2 motif; sequence DILLARRPT. Residue threonine 203 coordinates Mg(2+). Threonine 203 is subject to Phosphothreonine; by PKA. Residues 218–227 are G3 motif; it reads FKMVDVGGQR. The G4 motif stretch occupies residues 287 to 294; it reads ILFLNKTD. GTP-binding positions include 291–294 and alanine 349; that span reads NKTD. Residues 347–352 form a G5 motif region; sequence TTAINT.

Belongs to the G-alpha family. G(12) subfamily. In terms of assembly, g proteins are composed of 3 units; alpha, beta and gamma. The alpha chain contains the guanine nucleotide binding site. Interacts with UBXD5. Interacts with HAX1. Interacts (in GTP-bound form) with PPP5C (via TPR repeats); activates PPP5C phosphatase activity and translocates PPP5C to the cell membrane. Interacts with RGS22. Interacts (in GTP-bound form) with ARHGEF1. Interacts (in GTP-bound form) with ARHGEF11 (via RGS domain). Interacts (in GTP-bound form) with ARHGEF12 (via RGS domain). Interacts with CTNND1. Interacts with GASL2L2. Interacts with GPR35. Interacts with GPR174. Palmitoylation is critical for proper membrane localization and signaling. Post-translationally, phosphorylation on Thr-203 by PKA destabilizes the heterotrimer of alpha, beta and gamma, and inhibits Rho activation. In terms of tissue distribution, expressed in testis, including in Leydig cells and in the seminiferous epithelium, in differentiating cells from the spermatogonia to mature spermatozoa stages and round spermatids (at protein level). Expressed in 99.2% of spermatozoa from healthy individuals, but only in 28.6% of macrocephalic spermatozoa from infertile patients (at protein level).

The protein resides in the cell membrane. The protein localises to the melanosome. It localises to the cytoplasm. Its subcellular location is the nucleus. Guanine nucleotide-binding proteins (G proteins) are involved as modulators or transducers in various transmembrane signaling systems. Activates effector molecule RhoA by binding and activating RhoGEFs (ARHGEF1/p115RhoGEF, ARHGEF11/PDZ-RhoGEF and ARHGEF12/LARG). GNA13-dependent Rho signaling subsequently regulates transcription factor AP-1 (activating protein-1). Promotes tumor cell invasion and metastasis by activating RhoA/ROCK signaling pathway. Inhibits CDH1-mediated cell adhesion in a process independent from Rho activation. In lymphoid follicles, transmits P2RY8- and S1PR2-dependent signals that lead to inhibition of germinal center (GC) B cell growth and migration outside the GC niche. This Homo sapiens (Human) protein is Guanine nucleotide-binding protein subunit alpha-13 (GNA13).